We begin with the raw amino-acid sequence, 586 residues long: 2-succinyl-5-enolpyruvyl-6-hydroxy-3-cyclohexene-1-carboxylate synthase (586 aa).

This sequence belongs to the TPP enzyme family. MenD subfamily. In terms of assembly, homodimer. Requires Mg(2+) as cofactor. Mn(2+) serves as cofactor. Thiamine diphosphate is required as a cofactor.

It catalyses the reaction isochorismate + 2-oxoglutarate + H(+) = 5-enolpyruvoyl-6-hydroxy-2-succinyl-cyclohex-3-ene-1-carboxylate + CO2. It functions in the pathway quinol/quinone metabolism; 1,4-dihydroxy-2-naphthoate biosynthesis; 1,4-dihydroxy-2-naphthoate from chorismate: step 2/7. Its pathway is cofactor biosynthesis; phylloquinone biosynthesis. Its function is as follows. Catalyzes the thiamine diphosphate-dependent decarboxylation of 2-oxoglutarate and the subsequent addition of the resulting succinic semialdehyde-thiamine pyrophosphate anion to isochorismate to yield 2-succinyl-5-enolpyruvyl-6-hydroxy-3-cyclohexene-1-carboxylate (SEPHCHC). This Acaryochloris marina (strain MBIC 11017) protein is 2-succinyl-5-enolpyruvyl-6-hydroxy-3-cyclohexene-1-carboxylate synthase.